Here is a 364-residue protein sequence, read N- to C-terminus: Protein BRI1-5 ENHANCED 1 (364 aa).

The span at 1 to 11 shows a compositional bias: acidic residues; the sequence is MVREEQEEDDN. Positions 1 to 22 are disordered; that stretch reads MVREEQEEDDNNNNNNGGGERK. NADP(+) contacts are provided by residues 44-49, R69, 98-99, Y202, K206, V232, and S244; these read GGSGFV and DL. K206 (proton donor) is an active-site residue.

The protein belongs to the NAD(P)-dependent epimerase/dehydratase family. As to quaternary structure, monomer. Mainly present in cell elongating-containing tissues. Strongly expressed in roots and flowers, also observed in petioles, stems, leaves and siliques.

It is found in the cytoplasm. It functions in the pathway plant hormone biosynthesis; brassinosteroid biosynthesis. In terms of biological role, element of the brassinosteroid metabolic pathway that regulates typhasterol (TY), castasterone (CS) and brassinolide (BL) levels. Involved in the control of organ elongation. This chain is Protein BRI1-5 ENHANCED 1, found in Arabidopsis thaliana (Mouse-ear cress).